A 307-amino-acid polypeptide reads, in one-letter code: Ribosomal RNA small subunit methyltransferase H (307 aa).

S-adenosyl-L-methionine is bound by residues 32-34 (GGH), Asp-52, Phe-78, Asp-99, and Gln-106. A disordered region spans residues 287 to 307 (KEEIESNKRSHSAKLRVAEKV).

Belongs to the methyltransferase superfamily. RsmH family.

It localises to the cytoplasm. The catalysed reaction is cytidine(1402) in 16S rRNA + S-adenosyl-L-methionine = N(4)-methylcytidine(1402) in 16S rRNA + S-adenosyl-L-homocysteine + H(+). Functionally, specifically methylates the N4 position of cytidine in position 1402 (C1402) of 16S rRNA. In Caldicellulosiruptor bescii (strain ATCC BAA-1888 / DSM 6725 / KCTC 15123 / Z-1320) (Anaerocellum thermophilum), this protein is Ribosomal RNA small subunit methyltransferase H.